The following is a 517-amino-acid chain: MKRSLLKTCSIIAGATIIFSSLSISRNPLEVQAASMRSASEIVQEMGVGWNLGNTLDAKITNLSYNTSPISFETGWGNPVTTKAMIDKIKNAGFKTIRIPTTWGEHLDGNNKLNEEWVKRVKEVVDYCIADDLYVILNTHHEGNWVIPTYAKESSVTPKLKTLWTQISEAFKDYDDHLIFETLNEPRLEGTPYEWTGGTSESRDVVNKYNAAALESIRKTGGNNLSRAVMMPTYAASGSSTTMNDFKVPDDKNVIASVHAYSPYFFAMDTSSNSVNTWGSSYDKYSLDVELDSYLNTFKSKGVPVVIGEFGSINKNNTSSRAELAEYYVTAAQKRGIPCVWWDNNYAETNKGETFGLLNRSTLNWYFSDIKDALIRGYKNVHPEATEDDKPSTDVTNPDSGNTKPDSGNTNPGTETTTPTDNEKISITSKINDWGGAYQADFTLKNNTSSDINNWSFKIKKNDIVFTNYWDVKITEENGYYVVTPQAWKTTILANSSIVISIQGTGKVISNFEYKFD.

An N-terminal signal peptide occupies residues 1–25 (MKRSLLKTCSIIAGATIIFSSLSIS). The active-site Proton donor is Glu-185. Glu-309 functions as the Nucleophile in the catalytic mechanism. Residues 382 to 392 (HPEATEDDKPS) are compositionally biased toward basic and acidic residues. Residues 382–424 (HPEATEDDKPSTDVTNPDSGNTKPDSGNTNPGTETTTPTDNEK) form a disordered region. Residues 393–407 (TDVTNPDSGNTKPDS) are compositionally biased toward polar residues. Residues 408–420 (GNTNPGTETTTPT) are compositionally biased toward low complexity. Residues 416–517 (TTTPTDNEKI…VISNFEYKFD (102 aa)) form the CBM2 domain.

Belongs to the glycosyl hydrolase 5 (cellulase A) family.

The enzyme catalyses Endohydrolysis of (1-&gt;4)-beta-D-glucosidic linkages in cellulose, lichenin and cereal beta-D-glucans.. Its function is as follows. Hydrolyzes barley beta-glucan, lichenan, carboxymethylcellulose and xylan. It shows preferential activity against the larger cellooligosaccharides (cellohexaose and cellopentaose); cellotetraose is the smallest substrate degraded completely. In Clostridium longisporum, this protein is Endoglucanase A (celA).